We begin with the raw amino-acid sequence, 252 residues long: Ribosomal RNA small subunit methyltransferase J (252 aa).

Residues 101–102 (RD), 117–118 (ER), 153–154 (SS), and Asp171 contribute to the S-adenosyl-L-methionine site.

The protein belongs to the methyltransferase superfamily. RsmJ family.

The protein localises to the cytoplasm. It carries out the reaction guanosine(1516) in 16S rRNA + S-adenosyl-L-methionine = N(2)-methylguanosine(1516) in 16S rRNA + S-adenosyl-L-homocysteine + H(+). Functionally, specifically methylates the guanosine in position 1516 of 16S rRNA. The chain is Ribosomal RNA small subunit methyltransferase J from Salmonella dublin (strain CT_02021853).